Here is a 166-residue protein sequence, read N- to C-terminus: Large ribosomal subunit protein uL11z (166 aa).

Belongs to the universal ribosomal protein uL11 family.

Its function is as follows. Binds directly to 26S ribosomal RNA. The chain is Large ribosomal subunit protein uL11z (RPL12A) from Arabidopsis thaliana (Mouse-ear cress).